A 340-amino-acid chain; its full sequence is Cyclic GMP-AMP synthase-like receptor 3 (340 aa).

ATP contacts are provided by residues Ser-62 and 74-76; that span reads EAD. Residues Glu-74, Asp-76, and Asp-177 each coordinate Mg(2+). ATP-binding positions include Lys-241 and 255-259; that span reads SYHLK. Residues Asp-267 and Asp-270 each contribute to the Mn(2+) site.

Belongs to the mab-21 family. It depends on Mg(2+) as a cofactor. Requires Mn(2+) as cofactor.

It carries out the reaction 2 ATP = 3',3'-c-di-AMP + 2 diphosphate. Functionally, nucleotidyltransferase that catalyzes the formation of cyclic di-AMP (3',3'-c-di-AMP) from 2 molecules of ATP and plays a key role in innate immunity. Acts as a key sensor of double-stranded RNA (dsRNA), the presence of dsRNA in the cytoplasm being a danger signal that triggers the immune responses. Directly binds dsRNA, activating the nucleotidyltransferase activity, leading to synthesis of 3',3'-c-di-AMP, a second messenger that binds to and activates Sting, thereby triggering the immune response via activation of the NF-kappa-B transcription factor. This is Cyclic GMP-AMP synthase-like receptor 3 from Stylophora pistillata (Smooth cauliflower coral).